A 24-amino-acid chain; its full sequence is Fibrinogen gamma chain (24 aa).

In terms of assembly, heterohexamer; disulfide linked. Contains 2 sets of 3 non-identical chains (alpha, beta and gamma). The 2 heterotrimers are in head to head conformation with the N-termini in a small central domain. In terms of processing, conversion of fibrinogen to fibrin is triggered by thrombin, which cleaves fibrinopeptides A and B from alpha and beta chains, and thus exposes the N-terminal polymerization sites responsible for the formation of the soft clot. The soft clot is converted into the hard clot by factor XIIIA which catalyzes the epsilon-(gamma-glutamyl)lysine cross-linking between gamma chains (stronger) and between alpha chains (weaker) of different monomers.

It localises to the secreted. Together with fibrinogen alpha (FGA) and fibrinogen beta (FGB), polymerizes to form an insoluble fibrin matrix. Has a major function in hemostasis as one of the primary components of blood clots. In addition, functions during the early stages of wound repair to stabilize the lesion and guide cell migration during re-epithelialization. Was originally thought to be essential for platelet aggregation, based on in vitro studies using anticoagulated blood. However, subsequent studies have shown that it is not absolutely required for thrombus formation in vivo. Enhances expression of SELP in activated platelets via an ITGB3-dependent pathway. Maternal fibrinogen is essential for successful pregnancy. Fibrin deposition is also associated with infection, where it protects against IFNG-mediated hemorrhage. May also facilitate the antibacterial immune response via both innate and T-cell mediated pathways. The protein is Fibrinogen gamma chain (FGG) of Canis lupus familiaris (Dog).